Reading from the N-terminus, the 321-residue chain is Arginine-hydroxylase NDUFAF5, mitochondrial (321 aa).

The transit peptide at 1-25 directs the protein to the mitochondrion; that stretch reads MNVSVKSLRGVSRTWRSFSSRQGMN.

It belongs to the methyltransferase superfamily. In terms of assembly, interacts with NDUFS7.

It is found in the mitochondrion inner membrane. In terms of biological role, arginine hydroxylase that mediates hydroxylation of 'Arg-111' of NDUFS7 and is involved in the assembly of mitochondrial NADH:ubiquinone oxidoreductase complex (complex I, MT-ND1) at early stages. May also have methyltransferase activity. The protein is Arginine-hydroxylase NDUFAF5, mitochondrial of Danio rerio (Zebrafish).